The following is a 413-amino-acid chain: MVYLQKQDKEVFDAIKLELGRQRANIELIASENFVSEQVMEAMGSVLTNKYAEGYPGKRYYGGCEFVDIVEDLARDRAKKLFGAEYANVQPHSGAQANMAVYHAVLEPGDTVLGMNLSHGGHLTHGSPVNFSGVLYNFVEYGVREDTKEIDYDIVREAALKHKPKMIVAGASAYPRKIDFAKFREIADEVGAYLMVDMAHIAGLVAAGLHQNPVPYADFTTTTTHKTLRGPRGGMILAKAEWEQKLNKSIFPGIQGGPLMHVIAAKAVAFGEALQPEFTTYCEQIIRNSKKLAETLQAHDVTVLTGGSDNHLLLIDLKPLSLTGKAVEKVLDEVGITVNKNTIPFETESPFVTSGIRVGVAAVTTRGFDEVAIEKVGVLISEVLHNIENEEVLADVKARVATLTNEYPLYPSL.

Residues leucine 117 and 121–123 (GHL) contribute to the (6S)-5,6,7,8-tetrahydrofolate site. Lysine 226 carries the post-translational modification N6-(pyridoxal phosphate)lysine. 349-351 (SPF) serves as a coordination point for (6S)-5,6,7,8-tetrahydrofolate.

Belongs to the SHMT family. Homodimer. Pyridoxal 5'-phosphate serves as cofactor.

It is found in the cytoplasm. It carries out the reaction (6R)-5,10-methylene-5,6,7,8-tetrahydrofolate + glycine + H2O = (6S)-5,6,7,8-tetrahydrofolate + L-serine. The protein operates within one-carbon metabolism; tetrahydrofolate interconversion. Its pathway is amino-acid biosynthesis; glycine biosynthesis; glycine from L-serine: step 1/1. Its function is as follows. Catalyzes the reversible interconversion of serine and glycine with tetrahydrofolate (THF) serving as the one-carbon carrier. This reaction serves as the major source of one-carbon groups required for the biosynthesis of purines, thymidylate, methionine, and other important biomolecules. Also exhibits THF-independent aldolase activity toward beta-hydroxyamino acids, producing glycine and aldehydes, via a retro-aldol mechanism. The sequence is that of Serine hydroxymethyltransferase from Listeria welshimeri serovar 6b (strain ATCC 35897 / DSM 20650 / CCUG 15529 / CIP 8149 / NCTC 11857 / SLCC 5334 / V8).